Reading from the N-terminus, the 443-residue chain is MKAQSKRTSRLLILLGIAVAIIVAVFVWRHFSATPDGSTGAQQHAVGNNPARAGGRRNMPMPPVQAATATEQAVPRYLTGLGTVIAANTVTVTSQVDGQLMAIHFTEGQQVNAGDLLVEIDPRPYQVQLTQAQGQLAKDQATLDNARRDLARYQKLAKTGLISQQDLDTQASLVRQSEGSVKADQGAIDSAKLQLTYSRITAPISGKVGLKQVDVGNYITSGTTTPIVVITQTHPVDVVFTLPESDIPAIMQAQKNAAKNNTTVPVEAWDRTNKQMLAQGYLLSIDNQIDTTTGTIKLKARFANEDDVLFPNQFVNARIKVDLLQNAVVVPTAAVQMGNEGSFVWTLNDENKVSKHLVTTGIQDSKQVVISAGLDAGQRVVTDGIDRLTEGLQVEVVTPRSADTTPTDAAEKPATAEKATHRRGEKSATGASAGSTTTAAEKS.

The first 24 residues, 1–24 (MKAQSKRTSRLLILLGIAVAIIVA), serve as a signal peptide directing secretion. Positions 36 to 46 (DGSTGAQQHAV) are enriched in polar residues. Disordered regions lie at residues 36–57 (DGSTGAQQHAVGNNPARAGGRR) and 398–443 (TPRS…AEKS). The segment covering 409–419 (AAEKPATAEKA) has biased composition (basic and acidic residues). The segment covering 427-443 (SATGASAGSTTTAAEKS) has biased composition (low complexity).

The protein belongs to the membrane fusion protein (MFP) (TC 8.A.1) family. Part of a tripartite efflux system composed of MdtA, MdtB and MdtC.

The protein resides in the cell inner membrane. This chain is Multidrug resistance protein MdtA, found in Yersinia enterocolitica serotype O:8 / biotype 1B (strain NCTC 13174 / 8081).